We begin with the raw amino-acid sequence, 355 residues long: Peptide chain release factor 1 (355 aa).

At Gln-231 the chain carries N5-methylglutamine. The segment at 283 to 303 (LAKESEARKSQVGSGDRSERI) is disordered.

This sequence belongs to the prokaryotic/mitochondrial release factor family. In terms of processing, methylated by PrmC. Methylation increases the termination efficiency of RF1.

Its subcellular location is the cytoplasm. Peptide chain release factor 1 directs the termination of translation in response to the peptide chain termination codons UAG and UAA. In Campylobacter lari (strain RM2100 / D67 / ATCC BAA-1060), this protein is Peptide chain release factor 1.